The chain runs to 364 residues: GDP-fucose transporter 1 (364 aa).

8 consecutive transmembrane segments (helical) span residues 34–56, 76–98, 111–130, 140–162, 167–185, 195–214, 227–249, and 264–286; these read FLLR…ISMV, VTFY…AACC, LRVA…MITF, VAFY…YLLL, SFYA…WLGV, SWLG…LNAI, IWRL…LLLL, and AHFW…VTGL.

This sequence belongs to the TPT transporter family. SLC35C subfamily.

Its subcellular location is the golgi apparatus membrane. It carries out the reaction GMP(out) + GDP-beta-L-fucose(in) = GMP(in) + GDP-beta-L-fucose(out). Its function is as follows. Antiporter specific for GDP-l-fucose and depending on the concomitant reverse transport of GMP. Involved in GDP-fucose import from the cytoplasm into the Golgi lumen. This is GDP-fucose transporter 1 from Homo sapiens (Human).